The sequence spans 178 residues: MMMMDLGFLEGGAGMADAGHDESGSPPRSGGVREQDRFLPIANISRIMKKAVPANGKIAKDAKETLQECVSEFISFVTSEASDKCQKEKRKTINGEDLLFAMGTLGFEEYVDPLKIYLHKYREVIGDSKLSSKAGDGSVKKDTIGPHSGASSSSAQGMVGAYTQGMGYMQPQYHNGDT.

A DNA-binding region spans residues 39–45 (LPIANIS). Positions 66–77 (LQECVSEFISFV) are subunit association domain (SAD). The disordered stretch occupies residues 131–156 (SSKAGDGSVKKDTIGPHSGASSSSAQ).

It belongs to the NFYB/HAP3 subunit family. In terms of assembly, heterotrimeric transcription factor composed of three components, NF-YA, NF-YB and NF-YC. NF-YB and NF-YC must interact and dimerize for NF-YA association and DNA binding. Interacts with NFYC4 and NFYC6. Ubiquitous.

Its subcellular location is the nucleus. In terms of biological role, component of the NF-Y/HAP transcription factor complex. The NF-Y complex stimulates the transcription of various genes by recognizing and binding to a CCAAT motif in promoters. May regulate the expression of photosynthetic genes, and may be involved in chloroplast and amyloplast development. The protein is Nuclear transcription factor Y subunit B-2 (NFYB2) of Oryza sativa subsp. japonica (Rice).